Consider the following 711-residue polypeptide: Polyribonucleotide nucleotidyltransferase (711 aa).

2 residues coordinate Mg(2+): D486 and D492. One can recognise a KH domain in the interval 553-612; sequence PRIHTIKINPDKIKDVIGKGGSVIRALTEETGTTIEIEDDGTVKIAATDGEKAKHAIRRI. The S1 motif domain occupies 622–690; sequence GRVYNGKVTR…RQGRIRLSIK (69 aa). The tract at residues 690–711 is disordered; that stretch reads KEATEQSQPAAALEAPAAEQGE. Residues 698–711 show a composition bias toward low complexity; that stretch reads PAAALEAPAAEQGE.

Belongs to the polyribonucleotide nucleotidyltransferase family. Component of the RNA degradosome, which is a multiprotein complex involved in RNA processing and mRNA degradation. Mg(2+) is required as a cofactor.

The protein resides in the cytoplasm. The catalysed reaction is RNA(n+1) + phosphate = RNA(n) + a ribonucleoside 5'-diphosphate. Its function is as follows. Involved in mRNA degradation. Catalyzes the phosphorolysis of single-stranded polyribonucleotides processively in the 3'- to 5'-direction. The protein is Polyribonucleotide nucleotidyltransferase of Escherichia coli O127:H6 (strain E2348/69 / EPEC).